The primary structure comprises 427 residues: Serine hydroxymethyltransferase (427 aa).

(6S)-5,6,7,8-tetrahydrofolate-binding positions include leucine 122 and glycine 126–leucine 128. Lysine 231 carries the post-translational modification N6-(pyridoxal phosphate)lysine.

It belongs to the SHMT family. In terms of assembly, homodimer. The cofactor is pyridoxal 5'-phosphate.

Its subcellular location is the cytoplasm. It catalyses the reaction (6R)-5,10-methylene-5,6,7,8-tetrahydrofolate + glycine + H2O = (6S)-5,6,7,8-tetrahydrofolate + L-serine. The protein operates within one-carbon metabolism; tetrahydrofolate interconversion. It participates in amino-acid biosynthesis; glycine biosynthesis; glycine from L-serine: step 1/1. Catalyzes the reversible interconversion of serine and glycine with tetrahydrofolate (THF) serving as the one-carbon carrier. This reaction serves as the major source of one-carbon groups required for the biosynthesis of purines, thymidylate, methionine, and other important biomolecules. Also exhibits THF-independent aldolase activity toward beta-hydroxyamino acids, producing glycine and aldehydes, via a retro-aldol mechanism. This is Serine hydroxymethyltransferase from Acidobacterium capsulatum (strain ATCC 51196 / DSM 11244 / BCRC 80197 / JCM 7670 / NBRC 15755 / NCIMB 13165 / 161).